Reading from the N-terminus, the 328-residue chain is Cell division protein ZipA (328 aa).

Topologically, residues 1–4 (MDLN) are periplasmic. A helical transmembrane segment spans residues 5–25 (TILIIVGIVALVALIVHGLWS). Residues 26-328 (NRREKSKYFD…NAEQAYLARV (303 aa)) lie on the Cytoplasmic side of the membrane. The disordered stretch occupies residues 43–82 (TSLTSRSHTQEEMAQPNNISPNTYVENGHTPIPQPTTEKV). Positions 57–67 (QPNNISPNTYV) are enriched in polar residues.

Belongs to the ZipA family. In terms of assembly, interacts with FtsZ via their C-terminal domains.

Its subcellular location is the cell inner membrane. In terms of biological role, essential cell division protein that stabilizes the FtsZ protofilaments by cross-linking them and that serves as a cytoplasmic membrane anchor for the Z ring. Also required for the recruitment to the septal ring of downstream cell division proteins. This Haemophilus influenzae (strain PittEE) protein is Cell division protein ZipA.